The sequence spans 226 residues: MTTTELVALLHLASPALPIGAFSYSQGFEAALDANLIRDADTARDWIASGLTDVLAHGELPFLAHQLARWHAHDADALARENAWFVASRESAELRRETEQMGWSLAQLCASLEWGDAARRATLAALKPIALPTAFAYAAAAHDAGADATLAAYAFGWVENQTSAALKAVPLGQLAGQRIIVALRGAIDAAVKRALATPPDAVNTFAPQLGILSARHETQYSRLFRS.

The protein belongs to the UreF family. As to quaternary structure, ureD, UreF and UreG form a complex that acts as a GTP-hydrolysis-dependent molecular chaperone, activating the urease apoprotein by helping to assemble the nickel containing metallocenter of UreC. The UreE protein probably delivers the nickel.

The protein localises to the cytoplasm. Required for maturation of urease via the functional incorporation of the urease nickel metallocenter. The protein is Urease accessory protein UreF of Burkholderia vietnamiensis (strain G4 / LMG 22486) (Burkholderia cepacia (strain R1808)).